The sequence spans 223 residues: uncharacterized protein (223 aa).

Positions 1–17 (MLGQGLIFISLAFVAHA) are cleaved as a signal peptide. Asparagine 58 carries an N-linked (GlcNAc...) asparagine glycan. The interval 149–188 (VRKKGSRPSKPQKEKQGNKQGSKTEESPNVDEDELESEPE) is disordered. Residues 159–174 (PQKEKQGNKQGSKTEE) show a composition bias toward basic and acidic residues. Residues 176-187 (PNVDEDELESEP) show a composition bias toward acidic residues. The helical transmembrane segment at 191-211 (TFFQKYGLYLIPILFLIIMSG) threads the bilayer.

It localises to the endoplasmic reticulum membrane. This is an uncharacterized protein from Schizosaccharomyces pombe (strain 972 / ATCC 24843) (Fission yeast).